A 293-amino-acid chain; its full sequence is Acetylglutamate kinase (293 aa).

Substrate-binding positions include 60-61, Arg82, and Asn188; that span reads GG.

It belongs to the acetylglutamate kinase family. ArgB subfamily.

The protein localises to the cytoplasm. The enzyme catalyses N-acetyl-L-glutamate + ATP = N-acetyl-L-glutamyl 5-phosphate + ADP. It participates in amino-acid biosynthesis; L-arginine biosynthesis; N(2)-acetyl-L-ornithine from L-glutamate: step 2/4. In terms of biological role, catalyzes the ATP-dependent phosphorylation of N-acetyl-L-glutamate. This is Acetylglutamate kinase from Methanothermobacter thermautotrophicus (strain ATCC 29096 / DSM 1053 / JCM 10044 / NBRC 100330 / Delta H) (Methanobacterium thermoautotrophicum).